We begin with the raw amino-acid sequence, 430 residues long: UDP-N-acetylglucosamine 1-carboxyvinyltransferase (430 aa).

22 to 23 (KN) is a binding site for phosphoenolpyruvate. Residue Arg102 coordinates UDP-N-acetyl-alpha-D-glucosamine. Residue Cys126 is the Proton donor of the active site. Cys126 is modified (2-(S-cysteinyl)pyruvic acid O-phosphothioketal). UDP-N-acetyl-alpha-D-glucosamine-binding positions include 131–135 (RPVDL), 172–175 (KVSV), Asp317, and Ile339.

It belongs to the EPSP synthase family. MurA subfamily.

Its subcellular location is the cytoplasm. The enzyme catalyses phosphoenolpyruvate + UDP-N-acetyl-alpha-D-glucosamine = UDP-N-acetyl-3-O-(1-carboxyvinyl)-alpha-D-glucosamine + phosphate. It participates in cell wall biogenesis; peptidoglycan biosynthesis. Its function is as follows. Cell wall formation. Adds enolpyruvyl to UDP-N-acetylglucosamine. The chain is UDP-N-acetylglucosamine 1-carboxyvinyltransferase from Rhizobium meliloti (strain 1021) (Ensifer meliloti).